We begin with the raw amino-acid sequence, 368 residues long: Cytochrome b (368 aa).

Transmembrane regions (helical) follow at residues 25-45 (FGSMLLTCLILQTSTGFFLAM), 69-90 (WIMQNTHAIGASMFFICVYIHI), 105-125 (WLSGTALLITLMATAFFGYVL), and 170-190 (FFALHFILPFLIISLSSIHII). 2 residues coordinate heme b: histidine 75 and histidine 89. The heme b site is built by histidine 174 and histidine 188. Residue histidine 193 participates in a ubiquinone binding. 4 helical membrane-spanning segments follow: residues 218–238 (YKDMLVLTIMITLLFTIMSFT), 280–300 (LGGTLALLMSVMILTTTPFTH), 312–332 (LTQTLFWLLIATFITITWTAT), and 339–358 (FIFISQMASIIYFSFFIINP).

This sequence belongs to the cytochrome b family. In terms of assembly, the cytochrome bc1 complex contains 3 respiratory subunits (MT-CYB, CYC1 and UQCRFS1), 2 core proteins (UQCRC1 and UQCRC2) and probably 6 low-molecular weight proteins. The cofactor is heme b.

It is found in the mitochondrion inner membrane. In terms of biological role, component of the ubiquinol-cytochrome c reductase complex (complex III or cytochrome b-c1 complex) that is part of the mitochondrial respiratory chain. The b-c1 complex mediates electron transfer from ubiquinol to cytochrome c. Contributes to the generation of a proton gradient across the mitochondrial membrane that is then used for ATP synthesis. This chain is Cytochrome b (MT-CYB), found in Notechis ater (Black tiger snake).